Consider the following 582-residue polypeptide: ATP-dependent lipid A-core flippase (582 aa).

Helical transmembrane passes span 26 to 46 (LIAASVALILNALVDSSLIYL), 68 to 88 (ILVMLFILLRGVSNYIASYCL), 140 to 160 (YVLVTIVREGAYLISLFAVMV), 164 to 184 (WQLSIVLFLLAPIIAFLISIV), and 252 to 272 (GLVQLIASLALSAVLYVATFP). The 284-residue stretch at 27 to 310 (IAASVALILN…LTSVNSQFQR (284 aa)) folds into the ABC transmembrane type-1 domain. The region spanning 342-578 (ITFDNVIFSY…GGAYKQLYSM (237 aa)) is the ABC transporter domain. 376–383 (GRSGSGKS) lines the ATP pocket.

It belongs to the ABC transporter superfamily. Lipid exporter (TC 3.A.1.106) family. Homodimer.

The protein localises to the cell inner membrane. It catalyses the reaction ATP + H2O + lipid A-core oligosaccharideSide 1 = ADP + phosphate + lipid A-core oligosaccharideSide 2.. Involved in lipopolysaccharide (LPS) biosynthesis. Translocates lipid A-core from the inner to the outer leaflet of the inner membrane. Transmembrane domains (TMD) form a pore in the inner membrane and the ATP-binding domain (NBD) is responsible for energy generation. This is ATP-dependent lipid A-core flippase from Haemophilus ducreyi (strain 35000HP / ATCC 700724).